A 59-amino-acid polypeptide reads, in one-letter code: Large ribosomal subunit protein uL30 (59 aa).

The protein belongs to the universal ribosomal protein uL30 family. As to quaternary structure, part of the 50S ribosomal subunit.

The chain is Large ribosomal subunit protein uL30 from Ectopseudomonas mendocina (strain ymp) (Pseudomonas mendocina).